Reading from the N-terminus, the 510-residue chain is GMP synthase [glutamine-hydrolyzing] (510 aa).

The region spanning Pro5–Asn195 is the Glutamine amidotransferase type-1 domain. Cys82 serves as the catalytic Nucleophile. Residues His169 and Glu171 contribute to the active site. Positions Trp196–Arg385 constitute a GMPS ATP-PPase domain. Ser223–Thr229 contributes to the ATP binding site.

Homodimer.

It carries out the reaction XMP + L-glutamine + ATP + H2O = GMP + L-glutamate + AMP + diphosphate + 2 H(+). The protein operates within purine metabolism; GMP biosynthesis; GMP from XMP (L-Gln route): step 1/1. Its function is as follows. Catalyzes the synthesis of GMP from XMP. This is GMP synthase [glutamine-hydrolyzing] (guaA) from Aquifex aeolicus (strain VF5).